Consider the following 175-residue polypeptide: Protein UPS1, mitochondrial (175 aa).

Residues 1 to 80 (MVLLHKSTHI…RGITETWIIE (80 aa)) form a required for mitochondrial targeting region. In terms of domain architecture, PRELI/MSF1 spans 2 to 172 (VLLHKSTHIF…VIQKLEEARN (171 aa)). Residues tyrosine 26, lysine 58, lysine 148, and asparagine 152 each contribute to the a 1,2-diacyl-sn-glycero-3-phosphate site.

The protein belongs to the slowmo family. In terms of assembly, interacts with MDM35. Found associated with a 170 kDa complex.

It is found in the mitochondrion inner membrane. The protein resides in the mitochondrion intermembrane space. Functionally, required for maintenance of normal mitochondrial morphology. Required for PCP1-dependent processing of MGM1. The UPS1:MDM35 complex mediates the transfer of phosphatidic acid (PA) between liposomes and probably functions as a PA transporter across the mitochondrion intermembrane space. Phosphatidic acid release requires dissociation of the UPS1:MDM35 complex. Phosphatidic acid import is required for cardiolipin (CL) synthesis in the mitochondrial inner membrane. With UPS2, controls the level of cardiolipin in mitochondria. Cardiolipin is a unique phospholipid with four fatty acid chains and is present mainly in the mitochondrial inner membrane where it stabilizes the electron transport chain supercomplex between complexes III and IV through direct interaction of their subunits. This chain is Protein UPS1, mitochondrial (UPS1), found in Saccharomyces cerevisiae (strain ATCC 204508 / S288c) (Baker's yeast).